A 279-amino-acid polypeptide reads, in one-letter code: MKKFFPFRGKRKTDDSHSHSSEVPISLAKTAPPSLSIGGGYHLRDKHLKKLHKAATIGNEQKLKDYLERKKYNVNGRDKRSRTPLHLACANGYTNIVSLLIENQCKINVQDSENRTPLIKAVECQQESCATVLLLHGADPNLVDVYSNTALHYAVCGQNISLANKLLQYKANLEAKNKDGHTPLLLAVAENNENMVKFLLKKGADVNASDKNHRTAIMIALIVEPTSSVKLLLQQDTDLAHKDIYGFTAEEYASFNGFTMYHHITANNENKKKTEQTAY.

A compositionally biased stretch (basic residues) spans 1 to 11 (MKKFFPFRGKR). A disordered region spans residues 1 to 25 (MKKFFPFRGKRKTDDSHSHSSEVPI). 5 ANK repeats span residues 80–109 (RSRTPLHLACANGYTNIVSLLIENQCKINV), 113–142 (ENRTPLIKAVECQQESCATVLLLHGADPNL), 146–175 (YSNTALHYAVCGQNISLANKLLQYKANLEA), 179–208 (DGHTPLLLAVAENNENMVKFLLKKGADVNA), and 212–241 (NHRTAIMIALIVEPTSSVKLLLQQDTDLAH).

This chain is Ankyrin repeat domain-containing protein 7 (Ankrd7), found in Mus musculus (Mouse).